Here is a 513-residue protein sequence, read N- to C-terminus: 2-isopropylmalate synthase (513 aa).

A Pyruvate carboxyltransferase domain is found at 4–266 (IEFFDTSLRD…KSPLVLAETM (263 aa)). D13, H201, H203, and N237 together coordinate Mn(2+). The interval 390-513 (ILNNVQIDGH…VEQISAHDGI (124 aa)) is regulatory domain.

Belongs to the alpha-IPM synthase/homocitrate synthase family. LeuA type 1 subfamily. In terms of assembly, homodimer. Mn(2+) is required as a cofactor.

The protein resides in the cytoplasm. It carries out the reaction 3-methyl-2-oxobutanoate + acetyl-CoA + H2O = (2S)-2-isopropylmalate + CoA + H(+). It participates in amino-acid biosynthesis; L-leucine biosynthesis; L-leucine from 3-methyl-2-oxobutanoate: step 1/4. In terms of biological role, catalyzes the condensation of the acetyl group of acetyl-CoA with 3-methyl-2-oxobutanoate (2-ketoisovalerate) to form 3-carboxy-3-hydroxy-4-methylpentanoate (2-isopropylmalate). This is 2-isopropylmalate synthase from Lactococcus lactis subsp. cremoris (strain SK11).